The sequence spans 388 residues: Succinate--CoA ligase [ADP-forming] subunit beta (388 aa).

In terms of domain architecture, ATP-grasp spans 9 to 244 (KQLFAEYGLP…PSQDDPREAH (236 aa)). ATP is bound by residues K46, 53–55 (GRG), E99, T102, and E107. Positions 199 and 213 each coordinate Mg(2+). Substrate contacts are provided by residues N264 and 321–323 (GIV).

Belongs to the succinate/malate CoA ligase beta subunit family. In terms of assembly, heterotetramer of two alpha and two beta subunits. The cofactor is Mg(2+).

The enzyme catalyses succinate + ATP + CoA = succinyl-CoA + ADP + phosphate. It catalyses the reaction GTP + succinate + CoA = succinyl-CoA + GDP + phosphate. Its pathway is carbohydrate metabolism; tricarboxylic acid cycle; succinate from succinyl-CoA (ligase route): step 1/1. Its function is as follows. Succinyl-CoA synthetase functions in the citric acid cycle (TCA), coupling the hydrolysis of succinyl-CoA to the synthesis of either ATP or GTP and thus represents the only step of substrate-level phosphorylation in the TCA. The beta subunit provides nucleotide specificity of the enzyme and binds the substrate succinate, while the binding sites for coenzyme A and phosphate are found in the alpha subunit. The protein is Succinate--CoA ligase [ADP-forming] subunit beta of Ectopseudomonas mendocina (strain ymp) (Pseudomonas mendocina).